The chain runs to 305 residues: UDP-3-O-acyl-N-acetylglucosamine deacetylase (305 aa).

Zn(2+) contacts are provided by His79, His238, and Asp242. Catalysis depends on His265, which acts as the Proton donor.

This sequence belongs to the LpxC family. It depends on Zn(2+) as a cofactor.

The catalysed reaction is a UDP-3-O-[(3R)-3-hydroxyacyl]-N-acetyl-alpha-D-glucosamine + H2O = a UDP-3-O-[(3R)-3-hydroxyacyl]-alpha-D-glucosamine + acetate. It functions in the pathway glycolipid biosynthesis; lipid IV(A) biosynthesis; lipid IV(A) from (3R)-3-hydroxytetradecanoyl-[acyl-carrier-protein] and UDP-N-acetyl-alpha-D-glucosamine: step 2/6. Its function is as follows. Catalyzes the hydrolysis of UDP-3-O-myristoyl-N-acetylglucosamine to form UDP-3-O-myristoylglucosamine and acetate, the committed step in lipid A biosynthesis. The sequence is that of UDP-3-O-acyl-N-acetylglucosamine deacetylase from Escherichia fergusonii (strain ATCC 35469 / DSM 13698 / CCUG 18766 / IAM 14443 / JCM 21226 / LMG 7866 / NBRC 102419 / NCTC 12128 / CDC 0568-73).